Consider the following 228-residue polypeptide: L-ribulose-5-phosphate 4-epimerase UlaF (228 aa).

Residues Gly26 to Asn27, Ser43 to Gly44, and Ser72 to Ser73 each bind substrate. Positions 74, 93, and 95 each coordinate Zn(2+). The active-site Proton donor/acceptor is Asp118. His167 contacts Zn(2+). Tyr225 serves as the catalytic Proton donor/acceptor.

It belongs to the aldolase class II family. AraD/FucA subfamily. Zn(2+) serves as cofactor.

The enzyme catalyses L-ribulose 5-phosphate = D-xylulose 5-phosphate. Its pathway is cofactor degradation; L-ascorbate degradation; D-xylulose 5-phosphate from L-ascorbate: step 4/4. Its function is as follows. Catalyzes the isomerization of L-ribulose 5-phosphate to D-xylulose 5-phosphate. Is involved in the anaerobic L-ascorbate utilization. The protein is L-ribulose-5-phosphate 4-epimerase UlaF of Escherichia coli O7:K1 (strain IAI39 / ExPEC).